Here is a 20-residue protein sequence, read N- to C-terminus: IIDYYDEGEEDRDVGVVDAR.

A compositionally biased stretch (acidic residues) spans isoleucine 1–arginine 12. Positions isoleucine 1 to arginine 20 are disordered.

Heterohexamer; disulfide linked. Contains 2 sets of 3 non-identical chains (alpha, beta and gamma). The 2 heterotrimers are in head to head conformation with the N-termini in a small central domain. In terms of processing, conversion of fibrinogen to fibrin is triggered by thrombin, which cleaves fibrinopeptides A and B from alpha and beta chains, and thus exposes the N-terminal polymerization sites responsible for the formation of the soft clot.

The protein resides in the secreted. Its function is as follows. Cleaved by the protease thrombin to yield monomers which, together with fibrinogen alpha (FGA) and fibrinogen gamma (FGG), polymerize to form an insoluble fibrin matrix. Fibrin has a major function in hemostasis as one of the primary components of blood clots. In addition, functions during the early stages of wound repair to stabilize the lesion and guide cell migration during re-epithelialization. Was originally thought to be essential for platelet aggregation, based on in vitro studies using anticoagulated blood. However subsequent studies have shown that it is not absolutely required for thrombus formation in vivo. Enhances expression of SELP in activated platelets. Maternal fibrinogen is essential for successful pregnancy. Fibrin deposition is also associated with infection, where it protects against IFNG-mediated hemorrhage. May also facilitate the antibacterial immune response via both innate and T-cell mediated pathways. The protein is Fibrinogen beta chain (FGB) of Felis catus (Cat).